Here is a 354-residue protein sequence, read N- to C-terminus: Type II methylase M.HgiDII (354 aa).

The SAM-dependent MTase C5-type domain maps to 3-344; the sequence is GAVIDLFCGV…KSIKRFLEGL (342 aa). Residue Cys79 is part of the active site.

The protein belongs to the class I-like SAM-binding methyltransferase superfamily. C5-methyltransferase family.

It carries out the reaction a 2'-deoxycytidine in DNA + S-adenosyl-L-methionine = a 5-methyl-2'-deoxycytidine in DNA + S-adenosyl-L-homocysteine + H(+). In terms of biological role, a methylase that recognizes the double-stranded sequence 5'-GTCGAC-3', methylates C-? on both strands and protects the DNA from cleavage by the HgiDII endonuclease. The protein is Type II methylase M.HgiDII of Herpetosiphon aurantiacus (Herpetosiphon giganteus).